The sequence spans 212 residues: Photosynthetic NDH subunit of subcomplex B 5, chloroplastic (212 aa).

A chloroplast-targeting transit peptide spans 1–48; the sequence is MATVTILSPKSIPKVTDSKFGARVSDQIVNVVKCGKSGRRLKLAKLVS. 2 helical membrane-spanning segments follow: residues 115–135 and 136–156; these read FQGLISCMFLPAIALGMYFDA and PGEYLFIGAALFTVVFCIIEM.

Part of the chloroplast NDH complex, composed of a mixture of chloroplast and nucleus encoded subunits. Component of the NDH subcomplex B, at least composed of PnsB1, PnsB2, PnsB3, PnsB4 and PnsB5.

Its subcellular location is the plastid. The protein resides in the chloroplast membrane. In terms of biological role, NDH shuttles electrons from NAD(P)H:plastoquinone, via FMN and iron-sulfur (Fe-S) centers, to quinones in the photosynthetic chain and possibly in a chloroplast respiratory chain. The immediate electron acceptor for the enzyme in this species is believed to be plastoquinone. Couples the redox reaction to proton translocation, and thus conserves the redox energy in a proton gradient. In Arabidopsis thaliana (Mouse-ear cress), this protein is Photosynthetic NDH subunit of subcomplex B 5, chloroplastic.